A 175-amino-acid polypeptide reads, in one-letter code: Zinc finger protein ZAT18 (175 aa).

2 consecutive C2H2-type zinc fingers follow at residues 49–71 (FECK…RASH) and 93–115 (HKCT…MRKH). The Nuclear localization signal signature appears at 71–78 (HKKPKLIV). The EAR-like (transcriptional repression) motif lies at 146 to 152 (LDLNLTP).

In terms of tissue distribution, mostly expressed in stems, siliques and leaves, and, to a lower extent, in cotyledons, hypocotyls and roots.

It is found in the nucleus. Transcription factor involved in stress responses. Positive regulator of the jasmonic acid (JA)- mediated signaling pathway. Triggers the up-regulation of LOX3, VSP2, PAL1 and PAL2 in a JA-dependent manner. Promotes drought and osmotic stress tolerance by preventing reactive oxygen species (ROS) production (e.g. H(2)O(2)). This Arabidopsis thaliana (Mouse-ear cress) protein is Zinc finger protein ZAT18.